Here is a 454-residue protein sequence, read N- to C-terminus: Glutamine synthetase (454 aa).

The 87-residue stretch at 25–111 (QGIDFLRLQF…LICDVVDREG (87 aa)) folds into the GS beta-grasp domain. One can recognise a GS catalytic domain in the interval 118–454 (PRQVLKNVLA…WETDRYLEKF (337 aa)). Positions 141 and 143 each coordinate Mg(2+). Glu193 is a binding site for ATP. Mg(2+)-binding residues include Glu198 and Glu205. L-glutamate-binding positions include 249 to 250 (NG) and Gly250. His254 is a binding site for Mg(2+). ATP is bound by residues 256–258 (HIS) and Ser258. Arg308, Glu314, and Arg326 together coordinate L-glutamate. The ATP site is built by Arg326 and Arg331. Glu343 lines the Mg(2+) pocket. Residue Arg345 coordinates L-glutamate.

This sequence belongs to the glutamine synthetase family. As to quaternary structure, oligomer of 12 subunits arranged in the form of two hexagons. In its feedback-inhibited form, interacts with TnrA in order to block its DNA-binding activity. It depends on Mg(2+) as a cofactor.

The protein localises to the cytoplasm. It carries out the reaction L-glutamate + NH4(+) + ATP = L-glutamine + ADP + phosphate + H(+). With respect to regulation, inhibited by glutamine. In terms of biological role, glutamine synthetase (GS) is an unusual multitasking protein that functions as an enzyme, a transcription coregulator, and a chaperone in ammonium assimilation and in the regulation of genes involved in nitrogen metabolism. It catalyzes the ATP-dependent biosynthesis of glutamine from glutamate and ammonia. Feedback-inhibited GlnA also interacts with and regulates the activity of the transcriptional regulator TnrA. During nitrogen limitation, TnrA is in its DNA-binding active state and turns on the transcription of genes required for nitrogen assimilation. Under conditions of nitrogen excess, feedback-inhibited GlnA forms a stable complex with TnrA, which inhibits its DNA-binding activity. In contrast, feedback-inhibited GlnA acts as a chaperone to stabilize the DNA-binding activity of GlnR, which represses the transcription of nitrogen assimilation genes. The sequence is that of Glutamine synthetase from Halobacterium salinarum (strain ATCC 700922 / JCM 11081 / NRC-1) (Halobacterium halobium).